Here is a 767-residue protein sequence, read N- to C-terminus: 5-methyltetrahydropteroyltriglutamate--homocysteine methyltransferase (767 aa).

A 5-methyltetrahydropteroyltri-L-glutamate-binding site is contributed by K19. S89 is modified (phosphoserine). Residue N126 participates in 5-methyltetrahydropteroyltri-L-glutamate binding. Residue S242 is modified to Phosphoserine. L-homocysteine-binding positions include 444–446 (IGS) and E497. L-methionine is bound by residues 444-446 (IGS) and E497. 5-methyltetrahydropteroyltri-L-glutamate-binding positions include D502, Y525, and 528 to 529 (RY). Position 566 is a phosphothreonine (T566). W574 is a binding site for 5-methyltetrahydropteroyltri-L-glutamate. D612 lines the L-homocysteine pocket. L-methionine is bound at residue D612. S629 bears the Phosphoserine mark. H655, C657, and E677 together coordinate Zn(2+). The active-site Proton donor is the H705. S706 carries the post-translational modification Phosphoserine. A Zn(2+)-binding site is contributed by C737.

It belongs to the vitamin-B12 independent methionine synthase family. Requires Zn(2+) as cofactor.

It carries out the reaction 5-methyltetrahydropteroyltri-L-glutamate + L-homocysteine = tetrahydropteroyltri-L-glutamate + L-methionine. It functions in the pathway amino-acid biosynthesis; L-methionine biosynthesis via de novo pathway; L-methionine from L-homocysteine (MetE route): step 1/1. Its function is as follows. Catalyzes the transfer of a methyl group from 5-methyltetrahydrofolate to homocysteine resulting in methionine formation. The protein is 5-methyltetrahydropteroyltriglutamate--homocysteine methyltransferase (MET6) of Saccharomyces cerevisiae (strain ATCC 204508 / S288c) (Baker's yeast).